We begin with the raw amino-acid sequence, 449 residues long: Phosphoglucosamine mutase (449 aa).

Ser-104 (phosphoserine intermediate) is an active-site residue. Residues Ser-104, Asp-243, Asp-245, and Asp-247 each contribute to the Mg(2+) site. A Phosphoserine modification is found at Ser-104.

The protein belongs to the phosphohexose mutase family. The cofactor is Mg(2+). Activated by phosphorylation.

It catalyses the reaction alpha-D-glucosamine 1-phosphate = D-glucosamine 6-phosphate. In terms of biological role, catalyzes the conversion of glucosamine-6-phosphate to glucosamine-1-phosphate. The polypeptide is Phosphoglucosamine mutase (Xanthomonas euvesicatoria pv. vesicatoria (strain 85-10) (Xanthomonas campestris pv. vesicatoria)).